A 160-amino-acid polypeptide reads, in one-letter code: Large ribosomal subunit protein eL14 (160 aa).

Residues 136–160 (SDGTPRILKKDRRERLRAEKAKAKK) are disordered. Residues 146–160 (DRRERLRAEKAKAKK) are compositionally biased toward basic and acidic residues.

The protein belongs to the eukaryotic ribosomal protein eL14 family.

This Drosophila virilis (Fruit fly) protein is Large ribosomal subunit protein eL14 (RpL14).